A 190-amino-acid polypeptide reads, in one-letter code: Peptidyl-tRNA hydrolase (190 aa).

A tRNA-binding site is contributed by F14. Catalysis depends on H19, which acts as the Proton acceptor. TRNA contacts are provided by M64, N66, and N112.

It belongs to the PTH family. In terms of assembly, monomer.

Its subcellular location is the cytoplasm. It catalyses the reaction an N-acyl-L-alpha-aminoacyl-tRNA + H2O = an N-acyl-L-amino acid + a tRNA + H(+). Its function is as follows. Hydrolyzes ribosome-free peptidyl-tRNAs (with 1 or more amino acids incorporated), which drop off the ribosome during protein synthesis, or as a result of ribosome stalling. In terms of biological role, catalyzes the release of premature peptidyl moieties from peptidyl-tRNA molecules trapped in stalled 50S ribosomal subunits, and thus maintains levels of free tRNAs and 50S ribosomes. This Staphylococcus haemolyticus (strain JCSC1435) protein is Peptidyl-tRNA hydrolase.